A 266-amino-acid polypeptide reads, in one-letter code: Phosphate import ATP-binding protein PstB 2 (266 aa).

In terms of domain architecture, ABC transporter spans 13-252; that stretch reads LEAQGVNVYY…GPTEEIFQNP (240 aa). 45 to 52 serves as a coordination point for ATP; that stretch reads GPSGCGKS.

The protein belongs to the ABC transporter superfamily. Phosphate importer (TC 3.A.1.7) family. In terms of assembly, the complex is composed of two ATP-binding proteins (PstB), two transmembrane proteins (PstC and PstA) and a solute-binding protein (PstS).

The protein localises to the cell inner membrane. It catalyses the reaction phosphate(out) + ATP + H2O = ADP + 2 phosphate(in) + H(+). Its function is as follows. Part of the ABC transporter complex PstSACB involved in phosphate import. Responsible for energy coupling to the transport system. This Synechocystis sp. (strain ATCC 27184 / PCC 6803 / Kazusa) protein is Phosphate import ATP-binding protein PstB 2.